A 645-amino-acid polypeptide reads, in one-letter code: Protein LHY (645 aa).

Ser6 bears the Phosphoserine mark. The region spanning 19–73 (TITKQRERWTEDEHERFLEALRLYGRAWQRIEEHIGTKTAVQIRSHAQKFFTKLE) is the HTH myb-type domain. Positions 46-69 (WQRIEEHIGTKTAVQIRSHAQKFF) form a DNA-binding region, H-T-H motif. Disordered stretches follow at residues 89 to 127 (IEIP…AKLV), 149 to 212 (EKTS…GTTV), 410 to 437 (QNLA…ADSK), and 458 to 500 (AQKK…TDEN). The segment covering 110–120 (NNGTSSSQVSS) has biased composition (polar residues). Residues 149 to 158 (EKTSTGKENQ) show a composition bias toward basic and acidic residues. A compositionally biased stretch (polar residues) spans 159-169 (DENCSGVSTVN). Basic and acidic residues predominate over residues 197–207 (VPKKNKDKDGN). The span at 468 to 478 (SCGSNTPSGSD) shows a compositional bias: polar residues. Basic and acidic residues predominate over residues 483-498 (ALDKMEKDKEDVKETD).

In terms of assembly, homodimer or heterodimer with CCA1. Interacts with CCA1 (via internal domain); independently of photoperiod. Functions probably as part of a large complex. Interacts with CKB1 and CKB3. Interacts with LNK1 and LNK2. Phosphorylated by CK2. In terms of tissue distribution, expressed in leaves, roots, stems, flowers and siliques.

The protein localises to the nucleus. Transcription factor involved in the circadian clock. Binds to the promoter region of APRR1/TOC1 and TCP21/CHE to repress their transcription. Represses both CCA1 and itself. May recognize the promoter of JMJ14 to regulates its expression during the night in a circadian manner. In Arabidopsis thaliana (Mouse-ear cress), this protein is Protein LHY.